The primary structure comprises 512 residues: Pentatricopeptide repeat-containing protein At1g64583, mitochondrial (512 aa).

A mitochondrion-targeting transit peptide spans 1–34; the sequence is MRRLIVTGIATSTAKGFRRVVNPNLLGGGAAARA. PPR repeat units follow at residues 70–104, 105–139, 140–174, 175–209, 210–244, 245–279, 280–314, 315–349, 350–384, 385–415, 420–454, and 455–489; these read SIVD…GISH, DLYS…GYEP, SIVT…GYEP, NVVV…GLGA, DVVT…SINP, DVVT…SVDP, NNVT…GCFP, NVVT…GFNA, DIFT…RVTP, DIIT…MRES, GIVA…GVKP, and DART…GIIC.

This sequence belongs to the PPR family. P subfamily.

Its subcellular location is the mitochondrion. The polypeptide is Pentatricopeptide repeat-containing protein At1g64583, mitochondrial (Arabidopsis thaliana (Mouse-ear cress)).